The chain runs to 417 residues: Phosphoglycerate kinase 2 (417 aa).

Ser2 is subject to N-acetylserine. A phosphoserine mark is found at Ser2 and Ser4. Lys11 is subject to N6-acetyllysine. Residues Val23, Asp24, Phe25, Asn26, Gln38, and Arg39 each coordinate (2R)-3-phosphoglycerate. Residue Lys48 is modified to N6-acetyllysine. (2R)-3-phosphoglycerate contacts are provided by Ser62, His63, Gly65, and Arg66. Residues Lys75, Lys86, and Lys97 each carry the N6-acetyllysine modification. Residues Leu122 and Arg123 each contribute to the (2R)-3-phosphoglycerate site. Residues Lys131 and Lys146 each carry the N6-acetyllysine modification. The (2R)-3-phosphoglycerate site is built by His170 and Arg171. Tyr196 bears the Phosphotyrosine mark. Position 199 is an N6-acetyllysine (Lys199). Gly214 is an ADP binding site. Gly214 serves as a coordination point for CDP. Ala215 and Lys216 together coordinate AMP. Residue Ala215 participates in ATP binding. Ala215 serves as a coordination point for Mg(2+). Ala218 and Asp219 together coordinate Mg(2+). CDP is bound at residue Asp219. Lys220 provides a ligand contact to AMP. Lys220 contributes to the ATP binding site. Gly238 serves as a coordination point for ADP. CDP is bound at residue Gly238. Gly239 serves as a coordination point for AMP. Gly239 contacts ATP. N6-acetyllysine is present on residues Lys267 and Lys291. Position 313 (Gly313) interacts with AMP. An ATP-binding site is contributed by Gly313. 2 residues coordinate CDP: Gly338 and Phe343. An ADP-binding site is contributed by Phe343. Glu344 is an AMP binding site. Positions 344, 375, and 376 each coordinate ATP. A Mg(2+)-binding site is contributed by Asp375.

This sequence belongs to the phosphoglycerate kinase family. In terms of assembly, monomer. Mg(2+) is required as a cofactor.

It is found in the cytoplasm. It carries out the reaction (2R)-3-phosphoglycerate + ATP = (2R)-3-phospho-glyceroyl phosphate + ADP. Its pathway is carbohydrate degradation; glycolysis; pyruvate from D-glyceraldehyde 3-phosphate: step 2/5. Its function is as follows. Essential for sperm motility and male fertility but is not required for the completion of spermatogenesis. This chain is Phosphoglycerate kinase 2 (PGK2), found in Macaca fascicularis (Crab-eating macaque).